A 372-amino-acid polypeptide reads, in one-letter code: Biglycan (372 aa).

A signal peptide spans 1–19; it reads MPTMWPLWLLASLLALSQA. The propeptide occupies 20-40; it reads LPFEQKGFWDFTLDDGLPMLN. Residues Ser45 and Ser51 are each glycosylated (O-linked (Xyl...) (glycosaminoglycan) serine). 2 disulfide bridges follow: Cys67–Cys73 and Cys71–Cys80. LRR repeat units follow at residues 86-106, 107-130, 131-154, 155-175, 176-199, 200-224, 225-245, 246-269, 270-293, 294-316, 317-346, and 347-372; these read KAVP…NNEI, SELR…NNKI, SKIH…KNHL, VEIP…DNRI, RKVP…GNPL, ENSG…EAKL, TGIP…HNKI, QAIE…HNQI, RMIE…NNKL, SRVP…TNNI, TKVG…NNPV, and PYWE…NYKK. N-linked (GlcNAc...) asparagine glycans are attached at residues Asn274 and Asn315. Cys325 and Cys358 form a disulfide bridge.

The protein belongs to the small leucine-rich proteoglycan (SLRP) family. SLRP class I subfamily. In terms of assembly, homodimer. Forms a ternary complex with MFAP2 and ELN. Post-translationally, the two attached glycosaminoglycan chains can be either chondroitin sulfate or dermatan sulfate.

Its subcellular location is the secreted. The protein resides in the extracellular space. The protein localises to the extracellular matrix. Its function is as follows. May be involved in collagen fiber assembly. This Equus caballus (Horse) protein is Biglycan (BGN).